The primary structure comprises 619 residues: Mitogen-activated protein kinase kinase kinase 2 (619 aa).

Disordered stretches follow at residues 25 to 44 (LSLQ…QNDV), 126 to 168 (QATN…PPPG), 201 to 245 (LDPL…DNHQ), and 289 to 355 (RTQG…APTN). Ser26 carries the phosphoserine modification. The PB1 domain maps to 43–122 (DVRVKFEHRG…KSLKILLVVN (80 aa)). The span at 126–143 (QATNLEPSPSPEDLNNTP) shows a compositional bias: polar residues. Phosphoserine occurs at positions 153 and 164. Positions 203–219 (PLSLSSPENSGSGSCPS) are enriched in low complexity. Ser239, Ser297, Ser311, Ser331, Ser344, and Ser349 each carry phosphoserine. A compositionally biased stretch (polar residues) spans 290–299 (TQGTSFRSPV). The segment covering 300–315 (SFSPTDHSLSTSSGSS) has biased composition (low complexity). The segment covering 322-332 (DDSRIRRRGSD) has biased composition (basic and acidic residues). The span at 336–346 (PTLTVTDISPP) shows a compositional bias: polar residues. A Protein kinase domain is found at 356 to 616 (WRLGKLLGQG…AEELLRHMFV (261 aa)). Residues 362–370 (LGQGAFGRV) and Lys385 each bind ATP. Asp483 acts as the Proton acceptor in catalysis.

This sequence belongs to the protein kinase superfamily. STE Ser/Thr protein kinase family. MAP kinase kinase kinase subfamily. As to quaternary structure, self-associates. Binds both upstream activators and downstream substrates in multimolecular complexes. Interacts (via the kinase catalytic domain) with STK38. Interacts with XIAP/BIRC4. The cofactor is Mg(2+). Ubiquitination by XIAP/BIRC4 does not lead to proteasomal degradation. Post-translationally, autophosphorylated.

The protein resides in the cytoplasm. Its subcellular location is the nucleus. The enzyme catalyses L-seryl-[protein] + ATP = O-phospho-L-seryl-[protein] + ADP + H(+). It carries out the reaction L-threonyl-[protein] + ATP = O-phospho-L-threonyl-[protein] + ADP + H(+). With respect to regulation, activated by phosphorylation on Thr-524. Interacts with PKN2; the interaction activates PKN2 kinase activity in a MAP3K2-independent kinase activity. Its function is as follows. Component of a protein kinase signal transduction cascade. Regulates the JNK and ERK5 pathways by phosphorylating and activating MAP2K5 and MAP2K7. Plays a role in caveolae kiss-and-run dynamics. This Mus musculus (Mouse) protein is Mitogen-activated protein kinase kinase kinase 2 (Map3k2).